Consider the following 338-residue polypeptide: MLGRCFPPDTKEKQQLRMTKLCDPAESELSPFLITLILAVLLAEYLIGIIANGFIMAIHAAEWVQNKAVSTSGRILVFLSVSRIALQSLMMLEITISSTSLSFYSEDAVYYAFKISFIFLNFCSLWFAAWLSFFYFVKIANFSYPLFLKLRWRITGLIPWLLWLSVFISFSHSMFCINICTVYCNNSFPIHSSNSTKKTYLSEINVVGLAFFFNLGIVTPLIMFILTATLLILSLKRHTLHMGSNATGSNDPSMEAHMGAIKAISYFLILYIFNAVALFIYLSNMFDINSLWNNLCQIIMAAYPASHSILLIQDNPGLRRAWKRLQLRLHLYPKEWTL.

The Extracellular portion of the chain corresponds to 1–30 (MLGRCFPPDTKEKQQLRMTKLCDPAESELS). The chain crosses the membrane as a helical span at residues 31-51 (PFLITLILAVLLAEYLIGIIA). The Cytoplasmic portion of the chain corresponds to 52-74 (NGFIMAIHAAEWVQNKAVSTSGR). The chain crosses the membrane as a helical span at residues 75-95 (ILVFLSVSRIALQSLMMLEIT). Topologically, residues 96–116 (ISSTSLSFYSEDAVYYAFKIS) are extracellular. Residues 117-137 (FIFLNFCSLWFAAWLSFFYFV) form a helical membrane-spanning segment. At 138-156 (KIANFSYPLFLKLRWRITG) the chain is on the cytoplasmic side. Residues 157–177 (LIPWLLWLSVFISFSHSMFCI) form a helical membrane-spanning segment. Over 178–205 (NICTVYCNNSFPIHSSNSTKKTYLSEIN) the chain is Extracellular. Asparagine 185 and asparagine 194 each carry an N-linked (GlcNAc...) asparagine glycan. A helical transmembrane segment spans residues 206 to 226 (VVGLAFFFNLGIVTPLIMFIL). The Cytoplasmic segment spans residues 227-262 (TATLLILSLKRHTLHMGSNATGSNDPSMEAHMGAIK). The helical transmembrane segment at 263 to 283 (AISYFLILYIFNAVALFIYLS) threads the bilayer. The Extracellular portion of the chain corresponds to 284–291 (NMFDINSL). The chain crosses the membrane as a helical span at residues 292 to 312 (WNNLCQIIMAAYPASHSILLI). Residues 313–338 (QDNPGLRRAWKRLQLRLHLYPKEWTL) lie on the Cytoplasmic side of the membrane.

It belongs to the G-protein coupled receptor T2R family. Expressed in subsets of taste receptor cells of the tongue and exclusively in gustducin-positive cells.

The protein localises to the membrane. Its function is as follows. Receptor that may play a role in the perception of bitterness and is gustducin-linked. May play a role in sensing the chemical composition of the gastrointestinal content. The activity of this receptor may stimulate alpha gustducin, mediate PLC-beta-2 activation and lead to the gating of TRPM5. This is Taste receptor type 2 member 39 (TAS2R39) from Homo sapiens (Human).